A 519-amino-acid polypeptide reads, in one-letter code: Galactose-1-phosphate uridylyltransferase (519 aa).

It belongs to the galactose-1-phosphate uridylyltransferase type 2 family.

The protein resides in the cytoplasm. It catalyses the reaction alpha-D-galactose 1-phosphate + UDP-alpha-D-glucose = alpha-D-glucose 1-phosphate + UDP-alpha-D-galactose. It participates in carbohydrate metabolism; galactose metabolism. The sequence is that of Galactose-1-phosphate uridylyltransferase from Caldanaerobacter subterraneus subsp. tengcongensis (strain DSM 15242 / JCM 11007 / NBRC 100824 / MB4) (Thermoanaerobacter tengcongensis).